A 141-amino-acid chain; its full sequence is HTH-type transcriptional regulator ZntR (141 aa).

Positions Met-1–Ile-70 constitute an HTH merR-type domain. Residues Ile-4–Lys-23 constitute a DNA-binding region (H-T-H motif). Residues Cys-114, Cys-115, His-119, and Cys-124 each contribute to the Zn(2+) site.

In terms of assembly, homodimer.

Functionally, zinc-responsive transcriptional regulator of zntA. This Escherichia coli O157:H7 protein is HTH-type transcriptional regulator ZntR (zntR).